The following is a 1070-amino-acid chain: DNA-directed RNA polymerase subunit beta (1070 aa).

It belongs to the RNA polymerase beta chain family. As to quaternary structure, in plastids the minimal PEP RNA polymerase catalytic core is composed of four subunits: alpha, beta, beta', and beta''. When a (nuclear-encoded) sigma factor is associated with the core the holoenzyme is formed, which can initiate transcription.

Its subcellular location is the plastid. It is found in the chloroplast. The enzyme catalyses RNA(n) + a ribonucleoside 5'-triphosphate = RNA(n+1) + diphosphate. In terms of biological role, DNA-dependent RNA polymerase catalyzes the transcription of DNA into RNA using the four ribonucleoside triphosphates as substrates. This is DNA-directed RNA polymerase subunit beta from Solanum tuberosum (Potato).